Reading from the N-terminus, the 845-residue chain is Lon protease (845 aa).

In terms of domain architecture, Lon N-terminal spans 45 to 242 (MPILALRNMI…RLLYLLHKEL (198 aa)). 393–400 (GPPGVGKT) contributes to the ATP binding site. A Lon proteolytic domain is found at 629–811 (NGDAGVVIGL…NEVLKEALLE (183 aa)). Catalysis depends on residues serine 717 and lysine 760.

The protein belongs to the peptidase S16 family. As to quaternary structure, homohexamer. Organized in a ring with a central cavity.

It is found in the cytoplasm. The catalysed reaction is Hydrolysis of proteins in presence of ATP.. In terms of biological role, ATP-dependent serine protease that mediates the selective degradation of mutant and abnormal proteins as well as certain short-lived regulatory proteins. Required for cellular homeostasis and for survival from DNA damage and developmental changes induced by stress. Degrades polypeptides processively to yield small peptide fragments that are 5 to 10 amino acids long. Binds to DNA in a double-stranded, site-specific manner. This Porphyromonas gingivalis (strain ATCC 33277 / DSM 20709 / CIP 103683 / JCM 12257 / NCTC 11834 / 2561) protein is Lon protease.